A 387-amino-acid chain; its full sequence is Protein WHAT'S THIS FACTOR 9, mitochondrial (387 aa).

The N-terminal 24 residues, 1 to 24 (MLSIRRHAKTVASSCTNLTQKRTY), are a transit peptide targeting the mitochondrion. The PORR domain occupies 32 to 358 (KRDPYFDNIE…KKYIQLMKNS (327 aa)).

It localises to the mitochondrion. RNA-binding protein involved in group II intron splicing. Binds specific group II introns and promotes their splicing (e.g. rpl2 and ccmFC). This Arabidopsis thaliana (Mouse-ear cress) protein is Protein WHAT'S THIS FACTOR 9, mitochondrial.